A 124-amino-acid polypeptide reads, in one-letter code: Ubiquitin-related modifier 1 (124 aa).

Positions Ile34–Asp53 are disordered. Gly124 bears the 1-thioglycine mark. Gly124 is covalently cross-linked (Glycyl lysine isopeptide (Gly-Lys) (interchain with K-? in acceptor proteins)).

The protein belongs to the URM1 family. C-terminal thiocarboxylation occurs in 2 steps, it is first acyl-adenylated (-COAMP) via the hesA/moeB/thiF part of UBA4, then thiocarboxylated (-COSH) via the rhodanese domain of UBA4.

Its subcellular location is the cytoplasm. Its pathway is tRNA modification; 5-methoxycarbonylmethyl-2-thiouridine-tRNA biosynthesis. Its function is as follows. Acts as a sulfur carrier required for 2-thiolation of mcm(5)S(2)U at tRNA wobble positions of cytosolic tRNA(Lys), tRNA(Glu) and tRNA(Gln). Serves as sulfur donor in tRNA 2-thiolation reaction by being thiocarboxylated (-COSH) at its C-terminus by the MOCS3 homolog UBA4. The sulfur is then transferred to tRNA to form 2-thiolation of mcm(5)S(2)U. Prior mcm(5) tRNA modification by the elongator complex is required for 2-thiolation. Also acts as a ubiquitin-like protein (UBL) that is covalently conjugated via an isopeptide bond to lysine residues of target proteins such as AHP1. The thiocarboxylated form serves as substrate for conjugation and oxidative stress specifically induces the formation of UBL-protein conjugates. In Coprinopsis cinerea (strain Okayama-7 / 130 / ATCC MYA-4618 / FGSC 9003) (Inky cap fungus), this protein is Ubiquitin-related modifier 1.